A 601-amino-acid chain; its full sequence is UvrABC system protein C (601 aa).

Positions 15–94 (LQPGVYLFKN…IKSYKPRYNI (80 aa)) constitute a GIY-YIG domain. Residues 202–237 (QEIVREKEKEMAMAARSLEFEKAARLRDQIQSLRQL) form the UVR domain.

Belongs to the UvrC family. Interacts with UvrB in an incision complex.

It localises to the cytoplasm. Its function is as follows. The UvrABC repair system catalyzes the recognition and processing of DNA lesions. UvrC both incises the 5' and 3' sides of the lesion. The N-terminal half is responsible for the 3' incision and the C-terminal half is responsible for the 5' incision. The sequence is that of UvrABC system protein C from Syntrophomonas wolfei subsp. wolfei (strain DSM 2245B / Goettingen).